A 402-amino-acid polypeptide reads, in one-letter code: Envelope glycoprotein D (402 aa).

The signal sequence occupies residues 1-17 (MLLAALLAALVARTTLG). Intrachain disulfides connect Cys66–Cys189, Cys105–Cys205, and Cys117–Cys126. Residues 238–316 (YRKNGRTLPR…RPTPRPPRPE (79 aa)) form a profusion region. A disordered region spans residues 252–350 (ATPYAIDPAR…PRTPAAPGVS (99 aa)). A compositionally biased stretch (basic residues) spans 269–278 (PRPRPRPRPR). The span at 282-292 (EPAPATPAPPD) shows a compositional bias: pro residues. The span at 293–304 (RLPEPATRDHAA) shows a compositional bias: basic and acidic residues. The helical transmembrane segment at 356–376 (IVGTGTAMGALLVGVCVYIFF) threads the bilayer.

Belongs to the herpesviridae glycoprotein D family. Not N-glycosylated.

It localises to the virion membrane. In terms of biological role, envelope glycoprotein that binds to the host cell entry receptor NECTIN1, promoting the virus entry into host cells. In contrast, does not use host TNFRSF14 as receptor. May trigger fusion with host membrane, by recruiting the fusion machinery composed of gB and gH/gL. In Suid herpesvirus 1 (strain Rice) (SuHV-1), this protein is Envelope glycoprotein D.